The primary structure comprises 180 residues: Required for excision 1-B domain-containing protein (180 aa).

The segment at 1-23 (MITAEAASESTVPAVPGDTAATG) is disordered.

In Bos taurus (Bovine), this protein is Required for excision 1-B domain-containing protein.